The following is a 456-amino-acid chain: Elongator complex protein 4 (456 aa).

The span at 1–11 shows a compositional bias: basic and acidic residues; sequence MSFRKRGEILN. Residues 1 to 91 are disordered; that stretch reads MSFRKRGEIL…SQPTTSTGSA (91 aa). Position 13 is an omega-N-methylarginine (Arg13). The segment covering 18-27 has biased composition (low complexity); sequence RGPLLRGPPR. Positions 57-66 are enriched in basic and acidic residues; it reads NIADESKTKM. Over residues 77–90 the composition is skewed to low complexity; that stretch reads PSPATSQPTTSTGS. Residue Ser222 is modified to Phosphoserine. Positions 424–444 are disordered; that stretch reads EGSAASEQSHSHSHSDEISHN. Residues 432-442 are compositionally biased toward basic and acidic residues; that stretch reads SHSHSHSDEIS.

It belongs to the ELP4 family. In terms of assembly, component of the elongator complex which consists of ELP1/IKI3, ELP2, ELP3, ELP4, ELP5/IKI1 and ELP6. The elongator complex is composed of two copies of the Elp123 subcomplex (composed of ELP1/IKI3, ELP2 and ELP3) and two copies of the Elp456 subcomplex (composed of ELP4, ELP5/IKI1 and ELP6). The Elp123 subcomplex forms a two-lobed scaffold, which binds the Elp456 subcomplex asymmetrically. In each lobe, ELP2 is tightly sandwiched between ELP1/IKI3 and ELP3. The Elp123 subcomplex binds tRNA through ELP1/IKI3 and ELP3 and can bind 2 tRNAs simultaneously. tRNA-binding by the Elp123 subcomplex induces conformational rearrangements which precisely position the targeted anticodon base in the active site. The Elp456 subcomplex binds tRNA and has ATPase activity. ELP4 interacts with KTI12.

It is found in the cytoplasm. It localises to the nucleus. It functions in the pathway tRNA modification; 5-methoxycarbonylmethyl-2-thiouridine-tRNA biosynthesis. Component of the elongator complex, a multiprotein complex which is required for multiple tRNA modifications, including mcm5U (5-methoxycarbonylmethyl uridine), mcm5s2U (5-methoxycarbonylmethyl-2-thiouridine), and ncm5U (5-carbamoylmethyl uridine). The elongator complex catalyzes formation of carboxymethyluridine in the wobble base at position 34 in tRNAs. It functions as a gamma-toxin target (TOT); disruption of the complex confers resistance to Kluyveromyces lactis toxin zymocin (pGKL1 killer toxin). May also be involved in sensitivity to Pichia inositovora toxin. This chain is Elongator complex protein 4, found in Saccharomyces cerevisiae (strain ATCC 204508 / S288c) (Baker's yeast).